We begin with the raw amino-acid sequence, 436 residues long: Aminotransferase tdiD (436 aa).

Substrate-binding residues include Arg30, Tyr86, Tyr148, and Asn202. Lys270 carries the post-translational modification N6-(pyridoxal phosphate)lysine. Residue Arg407 participates in substrate binding.

Belongs to the class-I pyridoxal-phosphate-dependent aminotransferase family. The cofactor is pyridoxal 5'-phosphate.

It catalyses the reaction 3-phenylpyruvate + L-tryptophan = indole-3-pyruvate + L-phenylalanine. The protein operates within secondary metabolite biosynthesis. Aminotransferase; part of the gene cluster that mediates the biosynthesis of terrequinone A, an antitumor agent. The first step in the biosynthetic pathway for terrequinone A is formation of indole pyruvic acid (IPA) from L-tryptophan by the aminotransferase tdiD. The nonribosomal peptide synthase tdiA then immediately converts unstable IPA to didemethylasterriquinone D (DDAQ D), via condensation of 2 IPA molecules. The symmetric connectivity of the 2 IPA molecules is thought to arise by head-to-tail dual Claisen condensations facilitated by the TE domain. TdiB then catalyzes reverse prenylation by transferring dimethylallyl diphosphate to carbon atom 2' of DDAQ D, to yield asterriquinone C-1. Finally, tdiC and tdiE enzymes robustly convert asterriquinone C-1 to terrequinone A via a transformation involving regular prenylation at carbon atom 5, which requires elimination of the hydroxy group on C-5. The protein is Aminotransferase tdiD of Emericella nidulans (strain FGSC A4 / ATCC 38163 / CBS 112.46 / NRRL 194 / M139) (Aspergillus nidulans).